A 100-amino-acid polypeptide reads, in one-letter code: Urease subunit gamma (100 aa).

The protein belongs to the urease gamma subunit family. Heterotrimer of UreA (gamma), UreB (beta) and UreC (alpha) subunits. Three heterotrimers associate to form the active enzyme.

Its subcellular location is the cytoplasm. It catalyses the reaction urea + 2 H2O + H(+) = hydrogencarbonate + 2 NH4(+). It functions in the pathway nitrogen metabolism; urea degradation; CO(2) and NH(3) from urea (urease route): step 1/1. The protein is Urease subunit gamma of Actinobacillus pleuropneumoniae serotype 5b (strain L20).